Reading from the N-terminus, the 1215-residue chain is Inner capsid protein VP3 (1215 aa).

Positions 1 to 81 (MPRRPRRNAK…RVDNDGDVIT (81 aa)) are disordered. Over residues 21–44 (LVAPAANASVSSTVNTTTSPTLAA) the composition is skewed to low complexity. A C2H2-type zinc finger spans residues 118–141 (YRCNVCNAEFPSMSAMTEHLRTSH).

It belongs to the turreted BTV-fold inner capsid family. Homodecamer; each decamer is made up of two conformers of VP2, called VP2A and VP2B. 12 homodecamers assemble to form an icosahedral capsid. Interacts with VP6.

The protein localises to the virion. Inner capsid protein that self-assembles to form an icosahedral capsid with a T=2 symmetry, which consists of 120 copies of VP2, with channels at each of its five-fold vertices. This capsid constitutes the innermost concentric layer of the viral mature particle. This chain is Inner capsid protein VP3 (S3), found in Ctenopharyngodon idella (Grass carp).